The chain runs to 256 residues: Small ribosomal subunit protein eS1B (256 aa).

Ala-2 carries the N-acetylalanine; partial modification.

Belongs to the eukaryotic ribosomal protein eS1 family. In terms of assembly, component of the small ribosomal subunit. Mature ribosomes consist of a small (40S) and a large (60S) subunit. The 40S subunit contains about 33 different proteins and 1 molecule of RNA (18S). The 60S subunit contains about 49 different proteins and 3 molecules of RNA (25S, 5.8S and 5S).

It localises to the cytoplasm. The chain is Small ribosomal subunit protein eS1B from Clavispora lusitaniae (strain ATCC 42720) (Yeast).